Consider the following 2877-residue polypeptide: Desmoplakin (2877 aa).

Positions 1–20 (MSCNGGSHPRINTLGRMTRA) are disordered. Positions 1-591 (MSCNGGSHPR…DYMKTIEDLE (591 aa)) are interaction with PKP1, JUP, PKP2. Residues 1–1063 (MSCNGGSHPR…ANSENCNKNK (1063 aa)) form a globular 1 region. 2 positions are modified to phosphoserine: Ser-22 and Ser-62. Tyr-65 carries the phosphotyrosine modification. Position 70 is a phosphothreonine (Thr-70). A phosphoserine mark is found at Ser-174, Ser-175, and Ser-183. Spectrin repeat units lie at residues 185–278 (SGWD…HLRQ) and 279–382 (LQNI…LKEN). A Spectrin 3a repeat occupies 383–453 (AAYFQFFEEA…NLVNKSKKIV (71 aa)). In terms of domain architecture, SH3 spans 465-522 (NKPIILRALCDYKQDQKIVHKGDECILKDNNERSKWYVTGPGGVDMLVPSVGLIIPPP). Residues 523 to 552 (NPLAVDLSCKIEQYYEAILALWNQLYINMK) form a Spectrin 3b repeat. 3 Spectrin repeats span residues 553–634 (SLVS…IQLP), 661–776 (VIET…SLCS), and 777–890 (VRAL…DLEK). Coiled-coil stretches lie at residues 1034–1280 (LKLK…AEEN), 1313–1354 (NARH…YENE), 1395–1443 (TSGY…QKAS), and 1473–1926 (KQSL…KLED). The tract at residues 1064–1952 (FLDQNLQKYQ…QKEIDKLRQR (889 aa)) is central fibrous rod domain. 3 positions are modified to phosphoserine: Ser-1665, Ser-1715, and Ser-2031. Residues 1953 to 2877 (PYGSHRETQT…YSFSSSSIGY (925 aa)) are globular 2. The segment at 1967–2215 (TVDSSKLVFD…LLLSVQKRSM (249 aa)) is 4.5 X 38 AA tandem repeats (Domain A). Plectin repeat units lie at residues 2016 to 2052 (QPFL…PEST), 2053 to 2090 (VMLL…FDDR), 2091 to 2128 (QQIY…RETG), 2129 to 2166 (MRLL…RDLY), 2170 to 2204 (NDPR…PHTG), 2205 to 2240 (LLLL…PSTV), 2258 to 2295 (KDFL…PGTA), 2296 to 2333 (LELL…IEFK), 2334 to 2371 (EKLL…KGHG), 2372 to 2409 (IRLL…EELS), 2413 to 2447 (SDPS…EETG), 2463 to 2500 (SQKN…YETF), 2514 to 2551 (TITG…RKFF), 2617 to 2654 (SDPL…SITG), 2655 to 2692 (QRLL…QDMA), 2731 to 2768 (QRFL…GRAA), and 2769 to 2806 (QRLQ…DITG). A phosphoserine mark is found at Ser-2214, Ser-2216, and Ser-2232. The tract at residues 2251–2453 (DEVGERIKDF…EETGLCLLPL (203 aa)) is 4.5 X 38 AA tandem repeats (Domain B). An LRR 15 repeat occupies 2603-2628 (ISSVRNLTIRSSSLSDPLEESSPIAA). The segment at 2616–2828 (LSDPLEESSP…GLPSPYNMSA (213 aa)) is 4.5 X 38 AA tandem repeats (Domain C). A phosphoserine mark is found at Ser-2817 and Ser-2822. A disordered region spans residues 2817-2877 (SKGLPSPYNM…YSFSSSSIGY (61 aa)). Phosphotyrosine is present on Tyr-2824. A phosphoserine mark is found at Ser-2827 and Ser-2831. Positions 2830–2853 (GSRSGSRSGSRSGSRSGSRSGSRR) are 6 X 4 AA tandem repeats of G-S-R-[SR]. The span at 2830–2853 (GSRSGSRSGSRSGSRSGSRSGSRR) shows a compositional bias: low complexity. An omega-N-methylarginine mark is found at Arg-2832 and Arg-2853. Ser-2855 is modified (phosphoserine). The residue at position 2859 (Thr-2859) is a Phosphothreonine. The span at 2862 to 2877 (SSYSYSYSFSSSSIGY) shows a compositional bias: low complexity. Ser-2874 carries the phosphoserine modification.

Belongs to the plakin or cytolinker family. Homodimer. Interacts with COL17A1 (via cytoplasmic region). Interacts with DSC2. Interacts with PKP1. Interacts with PKP2. Interacts weakly with TMEM65. Phosphorylation at Ser-2855 increases association with intermediate filament cytokeratin, potentially facilitating interaction between desmosome junctions and intermediate filament architecture. Expressed in cardiomyocytes (at protein level).

It is found in the cell junction. It localises to the desmosome. The protein localises to the cell membrane. Its subcellular location is the cytoplasm. Its function is as follows. Major high molecular weight protein of desmosomes. Regulates profibrotic gene expression in cardiomyocytes via activation of the MAPK14/p38 MAPK signaling cascade and increase in TGFB1 protein abundance. This is Desmoplakin from Rattus norvegicus (Rat).